Here is a 451-residue protein sequence, read N- to C-terminus: Scaffold protein ILK (451 aa).

At methionine 1 the chain carries N-acetylmethionine. ANK repeat units lie at residues 2 to 30, 31 to 63, 64 to 96, 97 to 129, and 130 to 174; these read DDIFTQCREGNAVAVRLWLDNTENDLNQG, DDHGFSPLHWACREGRSAVVEMLIMRGARINVM, NRGDDTPLHLAASHGHRDIVQKLLQYKADINAV, NEHGNVPLHYACFWGQDQVAEDLVANGALVSIC, and NKYG…GTTR. The interval 33 to 139 is interaction with LIMS1; it reads HGFSPLHWAC…NKYGEMPMDK (107 aa). Threonine 173 bears the Phosphothreonine mark. The tract at residues 180 to 212 is PH-like; mediates interaction with TGFB1I1; it reads GTLNKHSGIDFKQLNFLAKLNENHSGELWKGRW. Serine 186 bears the Phosphoserine mark. A Protein kinase domain is found at 193-445; it reads LNFLAKLNEN…PKFDMIVPIL (253 aa). ATP-binding residues include asparagine 200, asparagine 202, histidine 203, and serine 204. Serine 246 carries the post-translational modification Phosphoserine. ATP-binding residues include histidine 270, methionine 272, and asparagine 279. Aspartate 339 provides a ligand contact to Mg(2+). Lysine 341 is a binding site for ATP. Residues 363–371 carry the Nuclear localization signal motif; sequence KKPEDTNRR. Position 425 is an N6-acetyllysine (lysine 425).

Belongs to the protein kinase superfamily. TKL Ser/Thr protein kinase family. As to quaternary structure, component of the heterotrimeric IPP (ILK-PINCH-PARVIN) complex composed of ILK, LIMS1/PINCH and PARVA; the complex binds to F-actin via the C-terminal tail of LIMS1 and the N-terminal region of PARVA, promoting F-actin filament bundling. Formation of the IPP complex is dependent on protein kinase C and precedes integrin-mediated cell adhesion and spreading. ILK also interacts with LIMS2/PINCH2 and with PARVB and PARVG which may substitute for LIMS1 and PARVA in the IPP complex; PARVA and PARVB compete for the same binding site. Interaction with PARVG promotes the establishment of cell polarity required for leukocyte migration. Interacts with the cytoplasmic domain of integrin ITGB1 and may also interact with integrins ITGB2, ITGB3 and/or ITGB5. Interacts probably also with TGFB1I1. Interacts (via ANK repeats) with EPHA1 (via SAM domain); stimulated by EFNA1 but independent of the kinase activity of EPHA1. Interacts with FERMT2. Interacts with LIMD2; leading to activate the protein kinase activity. Interacts with PXN/PAXILLIN (via LD motif 4). Interacts with CCDC25 (via cytoplasmic region); initiating the ILK-PARVB cascade to induce cytoskeleton rearrangement and directional migration of cells. Interacts with IQGAP1; the interaction is required for localization of IQGAP1 to the cell cortex. In terms of processing, phosphorylation by PAK1 modulates ILK subcellular location by promoting its nuclear export.

Its subcellular location is the cell junction. The protein resides in the focal adhesion. The protein localises to the cell membrane. It is found in the cell projection. It localises to the lamellipodium. Its subcellular location is the cytoplasm. The protein resides in the myofibril. The protein localises to the sarcomere. It is found in the nucleus. It localises to the cytoskeleton. Its subcellular location is the microtubule organizing center. The protein resides in the centrosome. The protein localises to the cell cortex. Functionally, scaffold protein which mediates protein-protein interactions during a range of cellular events including focal adhesion assembly, cell adhesion and cell migration. Regulates integrin-mediated signal transduction by contributing to inside-out integrin activation. Recruits PARVA and LIMS1/PITCH to form the heterotrimeric IPP (ILK-PINCH-PARVIN) complex which binds to F-actin via the C-terminal tail of LIMS1 and the N-terminal region of PARVA, promoting F-actin filament bundling, a process required to generate force for actin cytoskeleton reorganization and subsequent dynamic cell adhesion events such as cell spreading and migration. Binding to PARVA promotes effective assembly of ILK into focal adhesions while PARVA-bound ILK can simultaneously engage integrin-beta cytoplasmic tails to mediate cell adhesion. Plays a role with PARVG in promoting the cell adhesion and spreading of leukocytes. Acts as an upstream effector of both AKT1/PKB and GSK3. Mediates trafficking of caveolae to the cell surface in an ITGB1-dependent manner by promoting the recruitment of IQGAP1 to the cell cortex which cooperates with its effector DIAPH1 to locally stabilize microtubules and allow stable insertion of caveolae into the plasma membrane. Required for the maintenance of mitotic spindle integrity by promoting phosphorylation of TACC3 by AURKA. Associates with chromatin and may act as a negative regulator of transcription when located in the nucleus. The chain is Scaffold protein ILK from Cavia porcellus (Guinea pig).